The following is a 65-amino-acid chain: VKDGYIVDDKNCAYFCGRNAYCDDECEKNGAESGYCQWAGVYGNACWCYKLPDKVPIRVPGRCNG.

The 63-residue stretch at 2-64 (KDGYIVDDKN…VPIRVPGRCN (63 aa)) folds into the LCN-type CS-alpha/beta domain. Disulfide bonds link Cys-12–Cys-63, Cys-16–Cys-36, Cys-22–Cys-46, and Cys-26–Cys-48.

As to expression, expressed by the venom gland.

It localises to the secreted. In terms of biological role, alpha toxins bind voltage-independently at site-3 of sodium channels and inhibit the inactivation of the activated channels, thereby blocking neuronal transmission. In vivo, shows analgesic activity (ED(50) is 1.42 mg/kg) and antitumor activity against Ehrlich ascites tumor and S-180 fibrosarcoma models. This Olivierus martensii (Manchurian scorpion) protein is Neurotoxin BmK AGAP-SYPU2.